The primary structure comprises 227 residues: MKNCWFITGTDTNIGKTVSSIILLELARRYGYNTSGYKPIAAGCRTNDFKQYNSDAVLLRKFSTVKLSYQEVNPYLFIDPVCPFFTNEKNHMNVCMNKLSSGLQRLKKKSNWILIEGIGGLHTPFSNEFVMSDWIKKENLKTILVIGIKLGCINHAILTQKAILSSGLEFFGWIANYLLPTDTYNLTHIDILKKNMKSPYLGCIAYTPNIYNQIHHIPITIKLPLQN.

13–18 contacts ATP; sequence NIGKTV. Thr-17 is a binding site for Mg(2+). Lys-38 is an active-site residue. Residues Asp-55 and 116-119 each bind ATP; that span reads EGIG. The Mg(2+) site is built by Asp-55 and Glu-116.

This sequence belongs to the dethiobiotin synthetase family. As to quaternary structure, homodimer. The cofactor is Mg(2+).

The protein localises to the cytoplasm. It catalyses the reaction (7R,8S)-7,8-diammoniononanoate + CO2 + ATP = (4R,5S)-dethiobiotin + ADP + phosphate + 3 H(+). It participates in cofactor biosynthesis; biotin biosynthesis; biotin from 7,8-diaminononanoate: step 1/2. Catalyzes a mechanistically unusual reaction, the ATP-dependent insertion of CO2 between the N7 and N8 nitrogen atoms of 7,8-diaminopelargonic acid (DAPA, also called 7,8-diammoniononanoate) to form a ureido ring. The sequence is that of ATP-dependent dethiobiotin synthetase BioD from Buchnera aphidicola subsp. Baizongia pistaciae (strain Bp).